A 208-amino-acid polypeptide reads, in one-letter code: Protein Nef (208 aa).

A disordered region spans residues 1–33 (MGGKWSKRMSGWSAVRERMKRAEPAEPAADGVG). Residue Gly2 is the site of N-myristoyl glycine; by host attachment. Ser6 is subject to Phosphoserine; by host. A compositionally biased stretch (basic and acidic residues) spans 15–24 (VRERMKRAEP). The segment at 64-67 (EDED) is acidic; interacts with host PACS1 and PACS2; stabilizes the interaction of NEF/MHC-I with host AP1M1; necessary for MHC-I internalization. The SH3-binding; interaction with Src family tyrosine kinases stretch occupies residues 71 to 80 (PVRPQVPLRP). The short motif at 74–77 (PQVP) is the PxxP; stabilizes the interaction of NEF/MHC-I with host AP1M1; necessary for MHC-I internalization element. A mediates dimerization, Nef-PTE1 interaction region spans residues 110-126 (DILDLWIHHTQGYFPDW). Residues 150–182 (VDPDYVEEANAGENNSLLHPMSQHGMDDPEKEV) form a binding to ATP6V1H region. The Dileucine internalization motif; necessary for CD4 internalization motif lies at 166 to 167 (LL). Residues 176–177 (DD) carry the Diacidic; necessary for CD4 internalization motif.

Belongs to the lentivirus primate group Nef protein family. Monomer; cytosolic form. Homodimer; membrane bound form. Interacts with Nef associated p21-activated kinase (PAK2); this interaction activates PAK2. Associates with the Nef-MHC-I-AP1 complex; this complex is required for MHC-I internalization. Interacts (via C-terminus) with host PI3-kinase. Interacts with host PACS1; this interaction seems to be weak. Interacts with host PACS2. Interacts with host LCK and MAPK3; these interactions inhibit the kinase activity of the latter. Interacts with host ATP6V1H; this interaction may play a role in CD4 endocytosis. Associates with the CD4-Nef-AP2 complex; this complex is required for CD4 internalization. Interacts with host AP2 subunit alpha and AP2 subunit sigma2. Interacts with TCR-zeta chain; this interaction up-regulates the Fas ligand (FasL) surface expression. Interacts with host HCK, LYN, and SRC; these interactions activate the Src family kinases. Interacts with MAP3K5; this interaction inhibits the Fas and TNFR-mediated death signals. Interacts with beta-COP and PTE1. Interacts with human RACK1; this increases Nef phosphorylation by PKC. Interacts with TP53; this interaction decreases the half-life of TP53, protecting the infected cell against p53-mediated apoptosis. In terms of processing, the virion-associated Nef proteins are cleaved by the viral protease to release the soluble C-terminal core protein. Nef is probably cleaved concomitantly with viral structural proteins on maturation of virus particles. Post-translationally, myristoylated. Phosphorylated on serine residues, probably by host PKCdelta and theta.

It is found in the host cell membrane. The protein localises to the virion. The protein resides in the secreted. Its subcellular location is the host Golgi apparatus membrane. Factor of infectivity and pathogenicity, required for optimal virus replication. Alters numerous pathways of T-lymphocyte function and down-regulates immunity surface molecules in order to evade host defense and increase viral infectivity. Alters the functionality of other immunity cells, like dendritic cells, monocytes/macrophages and NK cells. Its function is as follows. In infected CD4(+) T-lymphocytes, down-regulates the surface MHC-I, mature MHC-II, CD4, CD28, CCR5 and CXCR4 molecules. Mediates internalization and degradation of host CD4 through the interaction of with the cytoplasmic tail of CD4, the recruitment of AP-2 (clathrin adapter protein complex 2), internalization through clathrin coated pits, and subsequent transport to endosomes and lysosomes for degradation. Diverts host MHC-I molecules to the trans-Golgi network-associated endosomal compartments by an endocytic pathway to finally target them for degradation. MHC-I down-regulation may involve AP-1 (clathrin adapter protein complex 1) or possibly Src family kinase-ZAP70/Syk-PI3K cascade recruited by PACS2. In consequence infected cells are masked for immune recognition by cytotoxic T-lymphocytes. Decreasing the number of immune receptors also prevents reinfection by more HIV particles (superinfection). Down-regulates host SERINC3 and SERINC5 thereby excluding these proteins from the viral particles. Virion infectivity is drastically higher when SERINC3 or SERINC5 are excluded from the viral envelope, because these host antiviral proteins impair the membrane fusion event necessary for subsequent virion penetration. In terms of biological role, bypasses host T-cell signaling by inducing a transcriptional program nearly identical to that of anti-CD3 cell activation. Interaction with TCR-zeta chain up-regulates the Fas ligand (FasL). Increasing surface FasL molecules and decreasing surface MHC-I molecules on infected CD4(+) cells send attacking cytotoxic CD8+ T-lymphocytes into apoptosis. Functionally, plays a role in optimizing the host cell environment for viral replication without causing cell death by apoptosis. Protects the infected cells from apoptosis in order to keep them alive until the next virus generation is ready to strike. Inhibits the Fas and TNFR-mediated death signals by blocking MAP3K5/ASK1. Decreases the half-life of TP53, protecting the infected cell against p53-mediated apoptosis. Inhibits the apoptotic signals regulated by the Bcl-2 family proteins through the formation of a Nef/PI3-kinase/PAK2 complex that leads to activation of PAK2 and induces phosphorylation of host BAD. Extracellular Nef protein targets CD4(+) T-lymphocytes for apoptosis by interacting with CXCR4 surface receptors. This is Protein Nef from Human immunodeficiency virus type 1 group M subtype B (isolate SF162) (HIV-1).